The sequence spans 349 residues: Sensory histidine kinase/phosphatase NtrB (349 aa).

The PAS domain occupies 5 to 78 (TQPDAGQILN…SLEAGQGFTD (74 aa)). The Histidine kinase domain maps to 136–349 (GLAHEIKNPL…EFSVYLPIRK (214 aa)). Histidine 139 is modified (phosphohistidine; by autocatalysis). Residue lysine 329 coordinates ATP.

In terms of processing, autophosphorylated.

The protein localises to the cytoplasm. It catalyses the reaction ATP + protein L-histidine = ADP + protein N-phospho-L-histidine.. Member of the two-component regulatory system NtrB/NtrC, which controls expression of the nitrogen-regulated (ntr) genes in response to nitrogen limitation. Under conditions of nitrogen limitation, NtrB autophosphorylates and transfers the phosphoryl group to NtrC. In the presence of nitrogen, acts as a phosphatase that dephosphorylates and inactivates NtrC. The polypeptide is Sensory histidine kinase/phosphatase NtrB (glnL) (Escherichia coli O157:H7).